The chain runs to 262 residues: 3-methyl-2-oxobutanoate hydroxymethyltransferase (262 aa).

The Mg(2+) site is built by Asp-42 and Asp-81. 3-methyl-2-oxobutanoate is bound by residues 42–43, Asp-81, and Lys-110; that span reads DS. Mg(2+) is bound at residue Glu-112. Glu-180 (proton acceptor) is an active-site residue.

It belongs to the PanB family. Homodecamer; pentamer of dimers. It depends on Mg(2+) as a cofactor.

Its subcellular location is the cytoplasm. The enzyme catalyses 3-methyl-2-oxobutanoate + (6R)-5,10-methylene-5,6,7,8-tetrahydrofolate + H2O = 2-dehydropantoate + (6S)-5,6,7,8-tetrahydrofolate. It participates in cofactor biosynthesis; (R)-pantothenate biosynthesis; (R)-pantoate from 3-methyl-2-oxobutanoate: step 1/2. Its function is as follows. Catalyzes the reversible reaction in which hydroxymethyl group from 5,10-methylenetetrahydrofolate is transferred onto alpha-ketoisovalerate to form ketopantoate. This Legionella pneumophila subsp. pneumophila (strain Philadelphia 1 / ATCC 33152 / DSM 7513) protein is 3-methyl-2-oxobutanoate hydroxymethyltransferase.